Here is a 418-residue protein sequence, read N- to C-terminus: Thyroxine-binding globulin (418 aa).

The first 20 residues, 1-20, serve as a signal peptide directing secretion; sequence MSVFFYLFVLVFGLQATIHC. Asn-24, Asn-39, Asn-102, Asn-168, Asn-227, and Asn-256 each carry an N-linked (GlcNAc...) asparagine glycan. The thyroxine site is built by Asn-296 and Lys-401.

The protein belongs to the serpin family.

Its subcellular location is the secreted. Functionally, major thyroid hormone transport protein in serum. This is Thyroxine-binding globulin (Serpina7) from Mus musculus (Mouse).